Reading from the N-terminus, the 142-residue chain is Transcriptional regulator MraZ (142 aa).

2 SpoVT-AbrB domains span residues E5–E47 and A76–K119.

This sequence belongs to the MraZ family. As to quaternary structure, forms oligomers.

The protein localises to the cytoplasm. Its subcellular location is the nucleoid. The protein is Transcriptional regulator MraZ of Clostridium acetobutylicum (strain ATCC 824 / DSM 792 / JCM 1419 / IAM 19013 / LMG 5710 / NBRC 13948 / NRRL B-527 / VKM B-1787 / 2291 / W).